We begin with the raw amino-acid sequence, 169 residues long: MYTSGYAHRSSSFSSAASKIARVSTENTTAGLISEVVYREDQPMMTQLLLLPLLQQLGQQSRWQLWLTPQQKLSREWVQASGLPLTKVMQISQLSPCHTVESMVRALRTGNYSVVIGWLTDDLTEEEHAELVDAANEGNAMGFIMRPVSASSHTTRQLSGLKIHSNLYH.

The ftsZ binding stretch occupies residues 106–112 (ALRTGNY). Residues 162 to 169 (KIHSNLYH) form a lon protease binding region.

This sequence belongs to the SulA family. As to quaternary structure, interacts with FtsZ. Post-translationally, is rapidly cleaved and degraded by the Lon protease once DNA damage is repaired.

In terms of biological role, component of the SOS system and an inhibitor of cell division. Accumulation of SulA causes rapid cessation of cell division and the appearance of long, non-septate filaments. In the presence of GTP, binds a polymerization-competent form of FtsZ in a 1:1 ratio, thus inhibiting FtsZ polymerization and therefore preventing it from participating in the assembly of the Z ring. This mechanism prevents the premature segregation of damaged DNA to daughter cells during cell division. The polypeptide is Cell division inhibitor SulA (Shigella flexneri serotype 5b (strain 8401)).